Here is a 362-residue protein sequence, read N- to C-terminus: Holliday junction branch migration complex subunit RuvB (362 aa).

Residues 4 to 186 (PDRPQRLVEQ…FGIPLRMQFY (183 aa)) form a large ATPase domain (RuvB-L) region. ATP-binding positions include isoleucine 25, arginine 26, glycine 67, lysine 70, threonine 71, threonine 72, 133 to 135 (EDF), arginine 176, tyrosine 186, and arginine 223. A Mg(2+)-binding site is contributed by threonine 71. Residues 187-257 (EPEELQLIVA…AAGGALTRLE (71 aa)) are small ATPAse domain (RuvB-S). The interval 260 to 362 (RLGFDAMDRR…GTPEGEGEDV (103 aa)) is head domain (RuvB-H). Residues arginine 296, arginine 315, and arginine 320 each coordinate DNA.

Belongs to the RuvB family. Homohexamer. Forms an RuvA(8)-RuvB(12)-Holliday junction (HJ) complex. HJ DNA is sandwiched between 2 RuvA tetramers; dsDNA enters through RuvA and exits via RuvB. An RuvB hexamer assembles on each DNA strand where it exits the tetramer. Each RuvB hexamer is contacted by two RuvA subunits (via domain III) on 2 adjacent RuvB subunits; this complex drives branch migration. In the full resolvosome a probable DNA-RuvA(4)-RuvB(12)-RuvC(2) complex forms which resolves the HJ.

Its subcellular location is the cytoplasm. The enzyme catalyses ATP + H2O = ADP + phosphate + H(+). The RuvA-RuvB-RuvC complex processes Holliday junction (HJ) DNA during genetic recombination and DNA repair, while the RuvA-RuvB complex plays an important role in the rescue of blocked DNA replication forks via replication fork reversal (RFR). RuvA specifically binds to HJ cruciform DNA, conferring on it an open structure. The RuvB hexamer acts as an ATP-dependent pump, pulling dsDNA into and through the RuvAB complex. RuvB forms 2 homohexamers on either side of HJ DNA bound by 1 or 2 RuvA tetramers; 4 subunits per hexamer contact DNA at a time. Coordinated motions by a converter formed by DNA-disengaged RuvB subunits stimulates ATP hydrolysis and nucleotide exchange. Immobilization of the converter enables RuvB to convert the ATP-contained energy into a lever motion, pulling 2 nucleotides of DNA out of the RuvA tetramer per ATP hydrolyzed, thus driving DNA branch migration. The RuvB motors rotate together with the DNA substrate, which together with the progressing nucleotide cycle form the mechanistic basis for DNA recombination by continuous HJ branch migration. Branch migration allows RuvC to scan DNA until it finds its consensus sequence, where it cleaves and resolves cruciform DNA. The sequence is that of Holliday junction branch migration complex subunit RuvB from Rhodospirillum centenum (strain ATCC 51521 / SW).